A 98-amino-acid polypeptide reads, in one-letter code: UPF0175 protein VNG_0066H (98 aa).

It belongs to the UPF0175 family.

The protein is UPF0175 protein VNG_0066H of Halobacterium salinarum (strain ATCC 700922 / JCM 11081 / NRC-1) (Halobacterium halobium).